A 382-amino-acid chain; its full sequence is MSAPQIPNLNTLRRGGGRGRFRARGGPDSSSSSGNKDRVVQGTDNDASVSRLSAVELGYLEDPFARALTPMGQEMRRLPIINRGTYVRTTAIDQLVASFLGLKADSDPTWKLKKKQIISLGAGSDTRVFRLLSLRPALDIIYHEIDFAVNNTAKIKAIQGTPLLQRVLGQSQVSISNEGDELHSPAYHIHAVDLRTLAQKGEGDKSTGQDPGRRLQDFVDTTLPTLLLSECCLIYLSPNDAAGVVRYFTHTLFPASQETETLALVLYEPIRPDDAFGRTMVANLATRGIQLQTLHQYASLGAQRQRLREHGFNGGQAAADVDFLWERWVAEEEKERVAALEMLDEVEEWKLLAQHYCVAWGWRKGSTRFTGWGDLDGQSAEE.

Polar residues predominate over residues 1 to 11 (MSAPQIPNLNT). The segment at 1 to 45 (MSAPQIPNLNTLRRGGGRGRFRARGGPDSSSSSGNKDRVVQGTDN) is disordered. S-adenosyl-L-methionine contacts are provided by residues R88, G121, D146, 193–194 (DL), and E230.

It belongs to the methyltransferase superfamily. LCMT family.

It catalyses the reaction [phosphatase 2A protein]-C-terminal L-leucine + S-adenosyl-L-methionine = [phosphatase 2A protein]-C-terminal L-leucine methyl ester + S-adenosyl-L-homocysteine. Functionally, methylates the carboxyl group of the C-terminal leucine residue of protein phosphatase 2A catalytic subunits to form alpha-leucine ester residues. The protein is Leucine carboxyl methyltransferase 1 (ppm1) of Emericella nidulans (strain FGSC A4 / ATCC 38163 / CBS 112.46 / NRRL 194 / M139) (Aspergillus nidulans).